Here is a 602-residue protein sequence, read N- to C-terminus: Elongation factor 4 (602 aa).

The region spanning 7 to 189 (ARLRNFCIIA…SVVDRIPPPK (183 aa)) is the tr-type G domain. Residues 19-24 (DHGKST) and 136-139 (NKVD) contribute to the GTP site.

It belongs to the TRAFAC class translation factor GTPase superfamily. Classic translation factor GTPase family. LepA subfamily.

It localises to the cell inner membrane. It carries out the reaction GTP + H2O = GDP + phosphate + H(+). Its function is as follows. Required for accurate and efficient protein synthesis under certain stress conditions. May act as a fidelity factor of the translation reaction, by catalyzing a one-codon backward translocation of tRNAs on improperly translocated ribosomes. Back-translocation proceeds from a post-translocation (POST) complex to a pre-translocation (PRE) complex, thus giving elongation factor G a second chance to translocate the tRNAs correctly. Binds to ribosomes in a GTP-dependent manner. The protein is Elongation factor 4 of Prochlorococcus marinus (strain SARG / CCMP1375 / SS120).